We begin with the raw amino-acid sequence, 397 residues long: Phosphoglycerate kinase (397 aa).

Residues 21-23, Arg36, 59-62, Arg118, and Arg151 contribute to the substrate site; these read DFN and HLGR. Residues Lys202, Gly293, Glu324, and 353–356 each bind ATP; that span reads GGDS.

The protein belongs to the phosphoglycerate kinase family. Monomer.

Its subcellular location is the cytoplasm. The catalysed reaction is (2R)-3-phosphoglycerate + ATP = (2R)-3-phospho-glyceroyl phosphate + ADP. It participates in carbohydrate degradation; glycolysis; pyruvate from D-glyceraldehyde 3-phosphate: step 2/5. This is Phosphoglycerate kinase from Chloroherpeton thalassium (strain ATCC 35110 / GB-78).